The chain runs to 368 residues: 3-dehydroquinate synthase (368 aa).

NAD(+) contacts are provided by residues 99-103 (GVVGD), 123-124 (TT), Lys-136, and Lys-145. Glu-178, His-242, and His-259 together coordinate Zn(2+).

It belongs to the sugar phosphate cyclases superfamily. Dehydroquinate synthase family. It depends on NAD(+) as a cofactor. Co(2+) is required as a cofactor. Requires Zn(2+) as cofactor.

The protein localises to the cytoplasm. The enzyme catalyses 7-phospho-2-dehydro-3-deoxy-D-arabino-heptonate = 3-dehydroquinate + phosphate. The protein operates within metabolic intermediate biosynthesis; chorismate biosynthesis; chorismate from D-erythrose 4-phosphate and phosphoenolpyruvate: step 2/7. Functionally, catalyzes the conversion of 3-deoxy-D-arabino-heptulosonate 7-phosphate (DAHP) to dehydroquinate (DHQ). This Chlorobaculum tepidum (strain ATCC 49652 / DSM 12025 / NBRC 103806 / TLS) (Chlorobium tepidum) protein is 3-dehydroquinate synthase.